Consider the following 220-residue polypeptide: Deoxyribose-phosphate aldolase (220 aa).

Aspartate 89 acts as the Proton donor/acceptor in catalysis. Lysine 151 functions as the Schiff-base intermediate with acetaldehyde in the catalytic mechanism. Residue lysine 180 is the Proton donor/acceptor of the active site.

It belongs to the DeoC/FbaB aldolase family. DeoC type 1 subfamily. In terms of assembly, homotetramer, in solution and in the crystal structure.

It localises to the cytoplasm. The catalysed reaction is 2-deoxy-D-ribose 5-phosphate = D-glyceraldehyde 3-phosphate + acetaldehyde. The protein operates within carbohydrate degradation; 2-deoxy-D-ribose 1-phosphate degradation; D-glyceraldehyde 3-phosphate and acetaldehyde from 2-deoxy-alpha-D-ribose 1-phosphate: step 2/2. Its function is as follows. Catalyzes a reversible aldol reaction between acetaldehyde and D-glyceraldehyde 3-phosphate to generate 2-deoxy-D-ribose 5-phosphate. This is Deoxyribose-phosphate aldolase from Thermus thermophilus (strain ATCC 27634 / DSM 579 / HB8).